The primary structure comprises 494 residues: UDP-glucose 6-dehydrogenase (494 aa).

Residues 11–16 (GAGYVG), Asp36, Arg41, 89–93 (VNTPT), and 130–132 (STV) contribute to the NAD(+) site. Positions 88-110 (SVNTPTKTYGMGKGRAADLKYIE) are disordered. The allosteric switch region stretch occupies residues 129–135 (KSTVPVR). Glu161 functions as the Proton donor/acceptor in the catalytic mechanism. Substrate contacts are provided by residues 161–165 (EFLAE), 220–224 (KLAAN), Arg260, and 267–273 (KASVGFG). NAD(+) is bound at residue Glu165. The active-site Proton donor/acceptor is Lys220. Catalysis depends on Cys276, which acts as the Nucleophile. Position 276–279 (276–279 (CFQK)) interacts with NAD(+). The interval 321–325 (SLFNT) is important for formation of active hexamer structure. Residue 338 to 339 (FK) participates in substrate binding. Residue Arg346 coordinates NAD(+). A substrate-binding site is contributed by Arg442. A disordered region spans residues 466–494 (VSAKRIPFASSCEIPKFSLQDPPVKKPRV).

It belongs to the UDP-glucose/GDP-mannose dehydrogenase family. In terms of assembly, homohexamer.

It carries out the reaction UDP-alpha-D-glucose + 2 NAD(+) + H2O = UDP-alpha-D-glucuronate + 2 NADH + 3 H(+). The protein operates within nucleotide-sugar biosynthesis; UDP-alpha-D-glucuronate biosynthesis; UDP-alpha-D-glucuronate from UDP-alpha-D-glucose: step 1/1. Its activity is regulated as follows. UDP-alpha-D-xylose (UDX) acts as a feedback inhibitor. It binds at the same site as the substrate, but functions as allosteric inhibitor by triggering a conformation change that disrupts the active hexameric ring structure and gives rise to an inactive, horseshoe-shaped hexamer. Its function is as follows. Catalyzes the formation of UDP-alpha-D-glucuronate, a constituent of complex glycosaminoglycans. Required for the biosynthesis of chondroitin sulfate and heparan sulfate. Required for embryonic development via its role in the biosynthesis of glycosaminoglycans. The sequence is that of UDP-glucose 6-dehydrogenase (UGDH) from Gallus gallus (Chicken).